Consider the following 182-residue polypeptide: Large ribosomal subunit protein uL5c (182 aa).

It belongs to the universal ribosomal protein uL5 family. In terms of assembly, part of the 50S ribosomal subunit; contacts the 5S rRNA.

The protein resides in the plastid. Its subcellular location is the chloroplast. Its function is as follows. Binds 5S rRNA, forms part of the central protuberance of the 50S subunit. The chain is Large ribosomal subunit protein uL5c (rpl5) from Cyanidium caldarium (Red alga).